Consider the following 187-residue polypeptide: ATP-dependent protease subunit HslV (187 aa).

Threonine 13 is an active-site residue. Na(+)-binding residues include alanine 172, cysteine 175, and threonine 178.

Belongs to the peptidase T1B family. HslV subfamily. As to quaternary structure, a double ring-shaped homohexamer of HslV is capped on each side by a ring-shaped HslU homohexamer. The assembly of the HslU/HslV complex is dependent on binding of ATP.

Its subcellular location is the cytoplasm. It carries out the reaction ATP-dependent cleavage of peptide bonds with broad specificity.. Allosterically activated by HslU binding. Functionally, protease subunit of a proteasome-like degradation complex believed to be a general protein degrading machinery. This is ATP-dependent protease subunit HslV from Caulobacter sp. (strain K31).